A 366-amino-acid chain; its full sequence is tRNA/tmRNA (uracil-C(5))-methyltransferase (366 aa).

Glutamine 190, tyrosine 218, asparagine 223, glutamate 239, and aspartate 299 together coordinate S-adenosyl-L-methionine. The Nucleophile role is filled by cysteine 324. Catalysis depends on glutamate 358, which acts as the Proton acceptor.

This sequence belongs to the class I-like SAM-binding methyltransferase superfamily. RNA M5U methyltransferase family. TrmA subfamily.

The catalysed reaction is uridine(54) in tRNA + S-adenosyl-L-methionine = 5-methyluridine(54) in tRNA + S-adenosyl-L-homocysteine + H(+). The enzyme catalyses uridine(341) in tmRNA + S-adenosyl-L-methionine = 5-methyluridine(341) in tmRNA + S-adenosyl-L-homocysteine + H(+). Its function is as follows. Dual-specificity methyltransferase that catalyzes the formation of 5-methyluridine at position 54 (m5U54) in all tRNAs, and that of position 341 (m5U341) in tmRNA (transfer-mRNA). The protein is tRNA/tmRNA (uracil-C(5))-methyltransferase of Salmonella paratyphi C (strain RKS4594).